A 327-amino-acid polypeptide reads, in one-letter code: Pectate lyase A (327 aa).

The N-terminal stretch at Met-1–Ala-19 is a signal peptide. Asn-99 is a glycosylation site (N-linked (GlcNAc...) asparagine). Positions 140, 169, and 173 each coordinate Ca(2+). Residue Arg-226 is part of the active site.

It belongs to the polysaccharide lyase 1 family. It depends on Ca(2+) as a cofactor.

The protein localises to the secreted. The catalysed reaction is Eliminative cleavage of (1-&gt;4)-alpha-D-galacturonan to give oligosaccharides with 4-deoxy-alpha-D-galact-4-enuronosyl groups at their non-reducing ends.. Its function is as follows. Pectinolytic enzyme consist of four classes of enzymes: pectin lyase, polygalacturonase, pectin methylesterase and rhamnogalacturonase. Among pectinolytic enzymes, pectin lyase is the most important in depolymerization of pectin, since it cleaves internal glycosidic bonds of highly methylated pectins. Favors pectate, the anion, over pectin, the methyl ester. This Emericella nidulans (strain FGSC A4 / ATCC 38163 / CBS 112.46 / NRRL 194 / M139) (Aspergillus nidulans) protein is Pectate lyase A (plyA).